Consider the following 150-residue polypeptide: MALDQSFVGRTYPPTPAYEVGREKIREFAEAVGDTHPAYVDAEAARALGHADVIAPPTFVFSITYRAAGEVVRDPQLGLDYSRVVHGDQKFSYVRPVRAGDRLTVTSTIEAVKSLAGNDIVDIRGDVHDETGELVVTALTKLVARAAEEA.

The MaoC-like domain occupies 10 to 116; sequence RTYPPTPAYE…STIEAVKSLA (107 aa).

It belongs to the UPF0336 family.

In Streptomyces griseus subsp. griseus (strain JCM 4626 / CBS 651.72 / NBRC 13350 / KCC S-0626 / ISP 5235), this protein is UPF0336 protein SGR_2883.